A 248-amino-acid chain; its full sequence is Large ribosomal subunit protein uL4 (248 aa).

Disordered regions lie at residues 48 to 96 (GTHK…PVPR) and 210 to 248 (AFSEDRDNPGTSLPKSPTPEDSSDATKARSSRHDDRTGA). Basic and acidic residues predominate over residues 233 to 248 (DATKARSSRHDDRTGA).

It belongs to the universal ribosomal protein uL4 family. As to quaternary structure, part of the 50S ribosomal subunit.

Its function is as follows. One of the primary rRNA binding proteins, this protein initially binds near the 5'-end of the 23S rRNA. It is important during the early stages of 50S assembly. It makes multiple contacts with different domains of the 23S rRNA in the assembled 50S subunit and ribosome. Forms part of the polypeptide exit tunnel. This chain is Large ribosomal subunit protein uL4, found in Tropheryma whipplei (strain Twist) (Whipple's bacillus).